Reading from the N-terminus, the 121-residue chain is Small ribosomal subunit protein uS12c (121 aa).

This sequence belongs to the universal ribosomal protein uS12 family. Part of the 30S ribosomal subunit.

Its subcellular location is the plastid. It localises to the apicoplast. Functionally, with S4 and S5 plays an important role in translational accuracy. Located at the interface of the 30S and 50S subunits. The polypeptide is Small ribosomal subunit protein uS12c (rps12) (Toxoplasma gondii).